Consider the following 311-residue polypeptide: MAVCLPDTQDDTPSIPIKLTRVGVTGVKKLLQLERNNKRPIILVPTFDAFVDLPNDQKGVHMSRNPEAISEVLDEVANDSSVEVETLCAKIVSKMMSKHEYAKRVEISMTTDYMFMKESPVTKNKTQEMAKLKAKAVGYREDGEIKIRKSIGAEVIGMTVCPCAQESVKESDKNKLLEFLDEETTQKVLDTVTFASHNQRGVGTLLIEVPEDREVKGEDIIEIIEESMSSPVCELLKRPDENATVLNAHKKPVFVEDCVRNMMEKIAKKYADFPEDTIITSRQENHESIHRHNAFAEKVTTMGELKEELRI.

The protein belongs to the GTP cyclohydrolase IV family. In terms of assembly, homodimer. Fe(2+) serves as cofactor.

The enzyme catalyses GTP + H2O = 7,8-dihydroneopterin 2',3'-cyclic phosphate + formate + diphosphate + H(+). It functions in the pathway cofactor biosynthesis; 5,6,7,8-tetrahydromethanopterin biosynthesis. Functionally, converts GTP to 7,8-dihydro-D-neopterin 2',3'-cyclic phosphate, the first intermediate in the biosynthesis of coenzyme methanopterin. The chain is GTP cyclohydrolase MptA from Methanobrevibacter smithii (strain ATCC 35061 / DSM 861 / OCM 144 / PS).